A 356-amino-acid chain; its full sequence is 11-beta-hydroxysteroid dehydrogenase (356 aa).

A helical; Signal-anchor for type II membrane protein transmembrane segment spans residues 10 to 30 (LVVPPAGLLMLAFAWPSLAFF). The Proline-knob motif lies at 13–26 (PPAGLLMLAFAWPS). An NADP(+)-binding site is contributed by 54–85 (GASSGIGEQIAYQYAKRRANLVLVARREHRLR). Residue serine 184 participates in substrate binding. Catalysis depends on tyrosine 197, which acts as the Proton acceptor. NADP(+) is bound by residues 197–201 (YNAAK) and lysine 201.

The protein belongs to the short-chain dehydrogenases/reductases (SDR) family. Expressed in megagametophytes (at protein level).

It localises to the lipid droplet. It is found in the membrane. It catalyses the reaction an 11beta-hydroxysteroid + NADP(+) = an 11-oxosteroid + NADPH + H(+). The catalysed reaction is corticosterone + NADP(+) = 11-dehydrocorticosterone + NADPH + H(+). It carries out the reaction 17beta-estradiol + NADP(+) = estrone + NADPH + H(+). Has dehydrogenase activity against corticosterone (11 beta-hydroxysteroid) and estradiol (17 beta-hydroxysteroid) in the presence of NADP(+). May be involved in signal transduction regulated by various sterols. The polypeptide is 11-beta-hydroxysteroid dehydrogenase (Pinus massoniana (Chinese red pine)).